A 210-amino-acid chain; its full sequence is Na(+)-translocating NADH-quinone reductase subunit D (210 aa).

6 helical membrane passes run 14-34 (PIVSNNPIALQVLGVCSALAV), 42-62 (LVMTIALTVVCAFSNLFISIL), 72-92 (IIVQMTIIASLVIVVDQVLQA), 103-123 (VFVGLIITNCIVMGRAEAYAM), 131-151 (FMDGIGNGIGYGAILLSVGFI), and 178-198 (NGLLLLPPSAFFLIGMLIWII).

Belongs to the NqrDE/RnfAE family. Composed of six subunits; NqrA, NqrB, NqrC, NqrD, NqrE and NqrF.

Its subcellular location is the cell inner membrane. The enzyme catalyses a ubiquinone + n Na(+)(in) + NADH + H(+) = a ubiquinol + n Na(+)(out) + NAD(+). Functionally, NQR complex catalyzes the reduction of ubiquinone-1 to ubiquinol by two successive reactions, coupled with the transport of Na(+) ions from the cytoplasm to the periplasm. NqrA to NqrE are probably involved in the second step, the conversion of ubisemiquinone to ubiquinol. The protein is Na(+)-translocating NADH-quinone reductase subunit D of Shewanella halifaxensis (strain HAW-EB4).